The primary structure comprises 605 residues: Hepatocyte nuclear factor 1-alpha-A (605 aa).

The interval 1–31 (MASQLSYLQRELLQALLESGVTKEALKKALA) is dimerization. Positions 1-32 (MASQLSYLQRELLQALLESGVTKEALKKALAD) constitute an HNF-p1 domain. Residues 57 to 81 (QLPNGLGESHISEDESSDDGEDFTP) form a disordered region. One can recognise a POU-specific atypical domain in the interval 85-180 (KELERLSPEE…IARLFTFTEF (96 aa)). Interaction with DNA stretches follow at residues 128–130 (QRE), 141–147 (HLSQHLN), 153–156 (KTQK), 206–209 (RFKW), 266–268 (RVY), and 273–276 (NRRK). The Nuclear localization signal motif lies at 200-208 (KKMRRNRFK). The segment at residues 202–282 (MRRNRFKWGP…NRRKEEAFRH (81 aa)) is a DNA-binding region (homeobox; HNF1-type). Polar residues predominate over residues 321-335 (DRSAVMANSQSTPSP). The tract at residues 321 to 343 (DRSAVMANSQSTPSPSALEPSHS) is disordered. The not present in other members of the HNF1 family stretch occupies residues 448 to 453 (PSHQLH).

It belongs to the HNF1 homeobox family. Binds DNA as dimer. Forms a homodimer or heterodimer with HNF1-alpha-B. Potentially also form a heterodimer with HNF1-beta. As to expression, protein expressed in liver, stomach, small intestine, colon and kidney. Not expressed in spleen, lung, blood, heart muscle, skeletal muscle, testis and brain.

The protein localises to the nucleus. In terms of biological role, transcriptional activator that regulates the tissue specific expression of multiple genes, especially in pancreas and liver. Binds to the hepatocyte specific promoter element HP1. Binds to the inverted palindrome 5'-GTTAATNATTAAC-3'. This is Hepatocyte nuclear factor 1-alpha-A (hnf1a-a) from Xenopus laevis (African clawed frog).